We begin with the raw amino-acid sequence, 518 residues long: Bifunctional purine biosynthesis protein PurH (518 aa).

One can recognise an MGS-like domain in the interval 1 to 144 (MSKRALISVS…KNHASVTVVC (144 aa)).

The protein belongs to the PurH family.

The catalysed reaction is (6R)-10-formyltetrahydrofolate + 5-amino-1-(5-phospho-beta-D-ribosyl)imidazole-4-carboxamide = 5-formamido-1-(5-phospho-D-ribosyl)imidazole-4-carboxamide + (6S)-5,6,7,8-tetrahydrofolate. The enzyme catalyses IMP + H2O = 5-formamido-1-(5-phospho-D-ribosyl)imidazole-4-carboxamide. Its pathway is purine metabolism; IMP biosynthesis via de novo pathway; 5-formamido-1-(5-phospho-D-ribosyl)imidazole-4-carboxamide from 5-amino-1-(5-phospho-D-ribosyl)imidazole-4-carboxamide (10-formyl THF route): step 1/1. It functions in the pathway purine metabolism; IMP biosynthesis via de novo pathway; IMP from 5-formamido-1-(5-phospho-D-ribosyl)imidazole-4-carboxamide: step 1/1. The chain is Bifunctional purine biosynthesis protein PurH from Lactococcus lactis subsp. lactis (strain IL1403) (Streptococcus lactis).